A 111-amino-acid chain; its full sequence is Cornifelin homolog (111 aa).

It belongs to the cornifelin family.

The protein is Cornifelin homolog (cnfn) of Xenopus tropicalis (Western clawed frog).